A 156-amino-acid polypeptide reads, in one-letter code: Cyclin-dependent kinase inhibitor 2A (156 aa).

M1 bears the N-acetylmethionine mark. Phosphoserine occurs at positions 7 and 8. ANK repeat units follow at residues 11 to 40, 44 to 72, 77 to 106, and 110 to 139; these read PSAD…LPNA, YGRR…EPNC, TLTR…RLDV, and WGRL…GTRG. Phosphoserine occurs at positions 140 and 152.

Belongs to the CDKN2 cyclin-dependent kinase inhibitor family. In terms of assembly, heterodimer with CDK4 or CDK6. Predominant p16 complexes contained CDK6. Interacts with CDK4 (both 'T-172'-phosphorylated and non-phosphorylated forms); the interaction inhibits cyclin D-CDK4 kinase activity. Interacts with ISCO2. In terms of processing, phosphorylation seems to increase interaction with CDK4. In terms of tissue distribution, widely expressed but not detected in brain or skeletal muscle. Isoform 3 is pancreas-specific.

The protein localises to the cytoplasm. It localises to the nucleus. Its function is as follows. Acts as a negative regulator of the proliferation of normal cells by interacting strongly with CDK4 and CDK6. This inhibits their ability to interact with cyclins D and to phosphorylate the retinoblastoma protein. The sequence is that of Cyclin-dependent kinase inhibitor 2A from Homo sapiens (Human).